A 56-amino-acid chain; its full sequence is Large ribosomal subunit protein bL33A (56 aa).

Belongs to the bacterial ribosomal protein bL33 family.

The protein is Large ribosomal subunit protein bL33A of Cutibacterium acnes (strain DSM 16379 / KPA171202) (Propionibacterium acnes).